The sequence spans 718 residues: Acetolactate synthase, mitochondrial (718 aa).

Disordered regions lie at residues 1–53 (MLTR…YDTP) and 75–99 (QSSA…QAAP). Residues 32–45 (RYSNNIHTSSTQNA) show a composition bias toward polar residues. Positions 76 to 99 (SSASTAAASPAVRPQPAQHFQAAP) are enriched in low complexity. Thiamine diphosphate is bound at residue glutamate 173. Arginine 275 lines the FAD pocket. Positions 301-326 (VQPGHSPYLPSNPLNPSSQPSDPLPG) are disordered. Over residues 306-325 (SPYLPSNPLNPSSQPSDPLP) the composition is skewed to low complexity. Residues 397–418 (HGSA…LGVR) and 449–468 (EIQP…VLGD) contribute to the FAD site. The segment at 541 to 621 (QHQMWACQYY…VKVLLFNNEF (81 aa)) is thiamine pyrophosphate binding. Aspartate 592 and asparagine 619 together coordinate Mg(2+).

Belongs to the TPP enzyme family. Requires Mg(2+) as cofactor. Thiamine diphosphate is required as a cofactor.

The protein localises to the mitochondrion. It carries out the reaction 2 pyruvate + H(+) = (2S)-2-acetolactate + CO2. Its pathway is amino-acid biosynthesis; L-isoleucine biosynthesis; L-isoleucine from 2-oxobutanoate: step 1/4. It functions in the pathway amino-acid biosynthesis; L-valine biosynthesis; L-valine from pyruvate: step 1/4. This chain is Acetolactate synthase, mitochondrial (ILV2), found in Cryptococcus neoformans var. grubii serotype A (strain H99 / ATCC 208821 / CBS 10515 / FGSC 9487) (Filobasidiella neoformans var. grubii).